Reading from the N-terminus, the 793-residue chain is Outer membrane protein assembly factor BamA (793 aa).

The N-terminal stretch at 1–19 is a signal peptide; that stretch reads MKKLLIASLLFGTTTTVFA. POTRA domains are found at residues 22-89, 90-170, 173-259, 262-341, and 344-418; these read FVAK…VVAK, SIIS…INED, AKLA…VNEG, YDLR…VDAG, and LTVR…VKER.

Belongs to the BamA family. As to quaternary structure, part of the Bam complex.

It is found in the cell outer membrane. Part of the outer membrane protein assembly complex, which is involved in assembly and insertion of beta-barrel proteins into the outer membrane. The sequence is that of Outer membrane protein assembly factor BamA from Haemophilus influenzae.